The following is a 458-amino-acid chain: Argininosuccinate lyase (458 aa).

It belongs to the lyase 1 family. Argininosuccinate lyase subfamily.

The protein localises to the cytoplasm. It catalyses the reaction 2-(N(omega)-L-arginino)succinate = fumarate + L-arginine. It functions in the pathway amino-acid biosynthesis; L-arginine biosynthesis; L-arginine from L-ornithine and carbamoyl phosphate: step 3/3. The chain is Argininosuccinate lyase from Neisseria meningitidis serogroup A / serotype 4A (strain DSM 15465 / Z2491).